The chain runs to 50 residues: uncharacterized protein (50 aa).

A helical membrane pass occupies residues 10–29; that stretch reads LFFYYPFFIIFLYIYLVFFI.

Its subcellular location is the plastid. It localises to the chloroplast membrane. This is an uncharacterized protein from Marchantia polymorpha (Common liverwort).